Reading from the N-terminus, the 247-residue chain is Probable 2-phosphosulfolactate phosphatase (247 aa).

This sequence belongs to the ComB family. Mg(2+) is required as a cofactor.

The enzyme catalyses (2R)-O-phospho-3-sulfolactate + H2O = (2R)-3-sulfolactate + phosphate. This is Probable 2-phosphosulfolactate phosphatase from Clostridium perfringens (strain SM101 / Type A).